Here is a 177-residue protein sequence, read N- to C-terminus: Interleukin-25 (177 aa).

A signal peptide spans 1 to 32 (MRERPRLGEDSSLISLFLQVVAFLAMVMGTHT). Positions 58-81 (PVPPLEPARPNRHPESCRASEDGP) are disordered. Over residues 69-78 (RHPESCRASE) the composition is skewed to basic and acidic residues. 2 cysteine pairs are disulfide-bonded: Cys110-Cys168 and Cys115-Cys170. N-linked (GlcNAc...) asparagine glycosylation is present at Asn136.

It belongs to the IL-17 family. In terms of tissue distribution, expressed at low levels in several tissues, including brain, kidney, lung, prostate, testis, spinal cord, adrenal gland, and trachea.

Its subcellular location is the secreted. Cytokine produced by various cells such as eosinophils, T-helper type 2 (Th2) cells or epithelial cells that plays a role in internal safety of adaptive immune responses by regulating cytokine production. Promotes and augments T-helper type 2 responses locally or systemically. Exerts its activity via its receptor composed of IL17RA and IL17RB for signal transduction. In turn, stimulates the JAK2-STAT5A pathway and promotes the secretion of type-2 associated cytokines including IL4, IL9 and IL13. Also induces the release of IL8, and IL6 from eosinophils through the combined activation of MAPK and NF-kappa-B pathways. Inhibits the differentiation of T-helper (Th17) cells via the production of IL4, IL5 and IL13. In Homo sapiens (Human), this protein is Interleukin-25 (IL25).